Consider the following 334-residue polypeptide: Small ribosomal subunit protein uS2 (334 aa).

It belongs to the universal ribosomal protein uS2 family.

The sequence is that of Small ribosomal subunit protein uS2 from Rhodopseudomonas palustris (strain BisB18).